We begin with the raw amino-acid sequence, 67 residues long: VIIIAVLFLTACQLIATASYARSERKHPDLRLSSRNSKLSKRCLGSREQCVRDTSCCSMSCTNNICF.

Positions 1 to 17 (VIIIAVLFLTACQLIAT) are cleaved as a signal peptide. The propeptide occupies 18-40 (ASYARSERKHPDLRLSSRNSKLS). Cystine bridges form between cysteine 43-cysteine 57, cysteine 50-cysteine 61, and cysteine 56-cysteine 66.

This sequence belongs to the conotoxin O1 superfamily. Expressed by the venom duct.

Its subcellular location is the secreted. The protein is Conotoxin AbVIN of Conus abbreviatus (Abbreviated cone).